Here is a 1464-residue protein sequence, read N- to C-terminus: Glutamate receptor ionotropic, NMDA 2A (1464 aa).

The first 22 residues, 1–22 (MGRVGYWTLLVLPALLVWRGPA), serve as a signal peptide directing secretion. Topologically, residues 23–556 (PSAAAEKGPP…SAFLEPFSAS (534 aa)) are extracellular. H44 contributes to the Zn(2+) binding site. A glycan (N-linked (GlcNAc...) asparagine) is linked at N75. A disulfide bond links C87 and C320. H128, E266, and D282 together coordinate Zn(2+). Residues N340, N380, N443, and N444 are each glycosylated (N-linked (GlcNAc...) asparagine). 2 disulfide bridges follow: C429-C455 and C436-C456. 3 residues coordinate L-glutamate: S511, T513, and R518. N541 carries an N-linked (GlcNAc...) asparagine glycan. The helical transmembrane segment at 557 to 576 (VWVMMFVMLLIVSAIAVFVF) threads the bilayer. The Cytoplasmic segment spans residues 577–600 (EYFSPVGYNRNLAKGKAPHGPSFT). The tract at residues 599–620 (FTIGKAIWLLWGLVFNNSVPVQ) is pore-forming. Positions 601 to 615 (IGKAIWLLWGLVFNN) form an intramembrane region, discontinuously helical. At 616 to 625 (SVPVQNPKGT) the chain is on the cytoplasmic side. The helical transmembrane segment at 626–646 (TSKIMVSVWAFFAVIFLASYT) threads the bilayer. At 647 to 814 (ANLAAFMIQE…NEVMSSQLDI (168 aa)) the chain is on the extracellular side. A glycan (N-linked (GlcNAc...) asparagine) is linked at N687. S689, T690, and D731 together coordinate L-glutamate. C745 and C800 are disulfide-bonded. Residues 815–835 (DNMAGVFYMLAAAMALSLITF) form a helical membrane-spanning segment. The Cytoplasmic portion of the chain corresponds to 836–1464 (IWEHLFYWKL…KKMPSIESDV (629 aa)). Phosphoserine is present on residues S882, S890, and S929. 2 stretches are compositionally biased toward polar residues: residues 1001–1010 (STESKVNSRP) and 1023–1032 (QDSLSQNPVS). 2 disordered regions span residues 1001-1088 (STES…NFKR) and 1148-1180 (PDPY…GLSN). Phosphoserine is present on S1025. 2 stretches are compositionally biased toward basic and acidic residues: residues 1033–1043 (QRDEATAENRT) and 1052–1061 (LPEEMAHSDI). Phosphoserine is present on residues S1059 and S1062. Over residues 1070–1087 (CHREPDNSKNPKTKDNFK) the composition is skewed to basic and acidic residues. Over residues 1165-1180 (LPMNRNPLQNEEGLSN) the composition is skewed to polar residues. Phosphoserine occurs at positions 1198 and 1291. Residues 1335–1372 (KLSGKKSSLFPQGLEDSKRSKSLLPDHTSDNPFLHSHR) are disordered. Residues 1462–1464 (SDV) carry the PDZ-binding motif.

It belongs to the glutamate-gated ion channel (TC 1.A.10.1) family. NR2A/GRIN2A subfamily. As to quaternary structure, heterotetramer. Forms heterotetrameric channels composed of two GluN1/zeta subunits (GRIN1), and two identical GluN2/epsilon subunits (GRIN2A, GRIN2B, GRIN2C or GRIN2D) or GluN3 subunits (GRIN3A or GRIN3B) (in vitro). Can also form heterotetrameric channels that contain at least two GluN1 subunits and at least two different GluN2 subunits (or a combination of one GluN2 and one GluN3 subunits) (in vitro). In vivo, the subunit composition may depend on the expression levels of the different subunits. Found in a complex with GRIN1, GRIN3A and PPP2CB. Found in a complex with GRIN1 and GRIN3B. Interacts with AIP1. Interacts with HIP1 and NETO1. Interacts with SNX27 (via PDZ domain); the interaction is required for recycling to the plasma membrane when endocytosed and prevent degradation in lysosomes. Interacts with PDZ domains of PATJ and DLG4. Interacts with LRFN2. Interacts with RPH3A and DLG4; this ternary complex regulates NMDA receptor composition at postsynaptic membranes. Interacts with SORCS2. Interacts with ARC; preventing ARC oligomerization. Interacts (via the extreme C-terminus) with FRMPD2 (the second PDZ domain); the interaction is direct and is likely to promote NMDAR-mediated neural signal transmission. GRIN2A binds FRMPD2 with lower affinity than GRIN2B.

The protein localises to the cell projection. Its subcellular location is the dendritic spine. The protein resides in the cell membrane. It localises to the synapse. It is found in the postsynaptic cell membrane. The protein localises to the cytoplasmic vesicle membrane. The enzyme catalyses Ca(2+)(in) = Ca(2+)(out). It carries out the reaction Na(+)(in) = Na(+)(out). The catalysed reaction is K(+)(in) = K(+)(out). Functionally, component of N-methyl-D-aspartate (NMDA) receptors (NMDARs) that function as heterotetrameric, ligand-gated cation channels with high calcium permeability and voltage-dependent block by Mg(2+). NMDARs participate in synaptic plasticity for learning and memory formation by contributing to the slow phase of excitatory postsynaptic current, long-term synaptic potentiation, and learning. Channel activation requires binding of the neurotransmitter L-glutamate to the GluN2 subunit, glycine or D-serine binding to the GluN1 subunit, plus membrane depolarization to eliminate channel inhibition by Mg(2+). NMDARs mediate simultaneously the potasium efflux and the influx of calcium and sodium. Each GluN2 subunit confers differential attributes to channel properties, including activation, deactivation and desensitization kinetics, pH sensitivity, Ca2(+) permeability, and binding to allosteric modulators. Participates in the synaptic plasticity regulation through activation by the L-glutamate releaseed by BEST1, into the synaptic cleft, upon F2R/PAR-1 activation in astrocyte. This is Glutamate receptor ionotropic, NMDA 2A from Pan troglodytes (Chimpanzee).